The sequence spans 394 residues: Bone morphogenetic protein 15 (394 aa).

The signal sequence occupies residues 1 to 18 (MVLLSILRILLLWGLVLF). The propeptide occupies 19–269 (MEHRVQMTQV…DPSLLLRRAR (251 aa)). N-linked (GlcNAc...) asparagine glycans are attached at residues asparagine 87 and asparagine 238. 3 cysteine pairs are disulfide-bonded: cysteine 293/cysteine 359, cysteine 322/cysteine 391, and cysteine 326/cysteine 393. Asparagine 375 is a glycosylation site (N-linked (GlcNAc...) asparagine).

This sequence belongs to the TGF-beta family. Homodimer or heterodimer (Potential). But, in contrast to other members of this family, cannot be disulfide-linked.

The protein localises to the secreted. May be involved in follicular development. Seems to be an oocyte-specific growth/differentiation factor that stimulates folliculogenesis and granulosa cell (GC) growth. The chain is Bone morphogenetic protein 15 (BMP15) from Bos taurus (Bovine).